The following is a 125-amino-acid chain: Fluoride-specific ion channel FluC (125 aa).

Helical transmembrane passes span 4–24 (VIYV…VGIV), 32–52 (FLPW…GLFA), 68–88 (LLIT…LDTV), and 100–120 (AFYV…GLAV). Na(+) contacts are provided by G75 and T78.

This sequence belongs to the fluoride channel Fluc/FEX (TC 1.A.43) family.

It localises to the cell inner membrane. It catalyses the reaction fluoride(in) = fluoride(out). Its activity is regulated as follows. Na(+) is not transported, but it plays an essential structural role and its presence is essential for fluoride channel function. Fluoride-specific ion channel. Important for reducing fluoride concentration in the cell, thus reducing its toxicity. This chain is Fluoride-specific ion channel FluC, found in Allorhizobium ampelinum (strain ATCC BAA-846 / DSM 112012 / S4) (Agrobacterium vitis (strain S4)).